The sequence spans 319 residues: Dehydrogenase/reductase SDR family member 9 (319 aa).

An N-terminal signal peptide occupies residues 1 to 17 (MLFWLLVLLILCGFLWN). Residues 34 to 58 (ITGC…HVIA) and aspartate 83 contribute to the NAD(+) site. Serine 164 is a binding site for substrate. The active-site Proton acceptor is the tyrosine 176. Position 180 (lysine 180) interacts with NAD(+).

The protein belongs to the short-chain dehydrogenases/reductases (SDR) family. As to quaternary structure, homotetramer.

Its subcellular location is the microsome membrane. It localises to the endoplasmic reticulum membrane. It carries out the reaction 3beta-hydroxy-5alpha-pregnane-20-one + NAD(+) = 5alpha-pregnane-3,20-dione + NADH + H(+). The enzyme catalyses 17beta-hydroxy-5alpha-androstan-3-one + NAD(+) = 5alpha-androstan-3,17-dione + NADH + H(+). It catalyses the reaction androsterone + NAD(+) = 5alpha-androstan-3,17-dione + NADH + H(+). The catalysed reaction is 5alpha-androstane-3alpha,17beta-diol + NAD(+) = 17beta-hydroxy-5alpha-androstan-3-one + NADH + H(+). It carries out the reaction all-trans-retinol + NAD(+) = all-trans-retinal + NADH + H(+). The enzyme catalyses 3alpha-hydroxy-5alpha-pregnan-20-one + NAD(+) = 5alpha-pregnane-3,20-dione + NADH + H(+). Its function is as follows. 3-alpha-hydroxysteroid dehydrogenase that converts 3-alpha-tetrahydroprogesterone (allopregnanolone) to dihydroxyprogesterone and 3-alpha-androstanediol to dihydroxyprogesterone. Also plays a role in the biosynthesis of retinoic acid from retinaldehyde. Can utilize both NADH and NADPH. The sequence is that of Dehydrogenase/reductase SDR family member 9 (DHRS9) from Bos taurus (Bovine).